The primary structure comprises 890 residues: MAYRKRGVKRENLLQQNERLQEKEIENNTDVTMENKNNNRKQQLSDKVLSQKEEIITDVQDDIKIVDEVKKSSKEESKQLLEILKTKEDHQKEVQYEILQKTIPTFEPKESILKKLEDIRPEQAKKQMKLFRIFEPRQLPIYRANGEKELRNRWYWKLKKDTLPDGDYDVREYFLNLYDQILIEMPDYLLLKDMAVENKNSRDAGKVVDSETASICDAIFQDEETEGVIRRFIADMRQQIQADRNIVNYPSILHPIDHAFNEYFLNHQLVEPLNNEIIFNYIPERIRNDVNYILNMDMNLPSTARYIRPNLLQDRLNLHDNFESLWDTITTSNYILARSVVPDLREKELVSTEAQIQKMSQDLQLEALTIQSETQFLAGINSQAANDCFKTLIAAMLSQRTMSLDFVTTNYMSLISGMWLLTVIPNDMFLRESLVACELAIINTIVYPAFGMQRMHYRNGDPQTPFQIAEQQIQNFQVANWLHFINNNRFRQVVIDGVLNQTLNDNIRNGQVINQLMEALMQLSRQQFPTMPVDYKRSIQRGILLLSNRLGQLVDLTRLLSYNYETLMACITMNMQHVQTLTTEKLQLTSVTSLCMLIGNTTVIPSPQTLFHYYNVNVNFHSNYNERINDAVAIITAANRLNLYQKKMKSIVEDFLKRLQIFDVPRVPDDQMYRLRDRLRLLPVERRRLDIFNLILMNMDQIERASDKIAQGVIIAYRDMQLERDEMYGFVNIARNLDGYQQINLEELMRTGDYGQITNMLLNNQPVALVGALPFVTDSSVISLIAKLDATVFAQIVKLRKVDTLKPILYKINSDSNDFYLVANYDWIPTSTTKVYKQIPQPFDFRASMHMLTSNLTFTVYSDLLSFVSADTVEPINAIAFDNMRIMNEL.

Residues 1-45 (MAYRKRGVKRENLLQQNERLQEKEIENNTDVTMENKNNNRKQQLS) are disordered. Positions 1-88 (MAYRKRGVKR…QLLEILKTKE (88 aa)) are 5-fold hub; involved in the encapsidation of VP1 and VP3. Residues 28–42 (NTDVTMENKNNNRKQ) are compositionally biased toward polar residues. Hydrophobic stretches follow at residues 404–424 (LDFVTTNYMSLISGMWLLTVI) and 432–452 (ESLVACELAIINTIVYPAFGM).

This sequence belongs to the rotavirus VP2 family. In terms of assembly, homodecamer; each decamer is made up of two conformers of VP2, called VP2A and VP2B. Interacts with a VP1-VP3 complex. Interacts with the intermediate capsid protein VP6. Interacts with NSP5. Interacts (via N-terminus) with NSP2. Post-translationally, sumoylated with SUMO1 and SUMO2. Sumoylation of viral proteins seems to have a positive role on viral replication.

Its subcellular location is the virion. Functionally, inner capsid protein that self-assembles to form an icosahedral capsid with a T=2 symmetry, which consists of 120 copies of VP2, with channels at each of its five-fold vertices. This capsid constitutes the innermost concentric layer of the viral mature particle. It encapsidates the polymerase VP1, the capping enzyme VP3 and the genomic dsRNA, thereby defining the core. The innermost VP2 capsid and the intermediate VP6 capsid remain intact following cell entry to protect the dsRNA from degradation and to prevent unfavorable antiviral responses in the host cell during all the replication cycle of the virus. Nascent transcripts are transcribed within the structural confines of this double-layered particle (DLP) and are extruded through the channels formed by VP2 N-termini. VP2 is required for the replicase activity of VP1 polymerase. Probably recruits a copy of a VP1-VP3 complex, potentially along with a segment of plus-strand RNA, as a decamer of VP2 assembles. May activate the autoinhibited VP1/RNA complex to coordinate packaging and genome replication. This chain is Inner capsid protein VP2, found in Rotavirus A (isolate RVA/Human/United States/WI61/1983/G9P1A[8]) (RV-A).